The chain runs to 253 residues: Acidic endochitinase Q (253 aa).

The N-terminal stretch at 1 to 24 (MEFSGSPMALFCCVFFLFLTGSLA) is a signal peptide. The Proton donor role is filled by Glu-92. A disulfide bridge links Cys-212 with Cys-244.

Belongs to the glycosyl hydrolase 19 family. Chitinase class I subfamily.

Its subcellular location is the secreted. It carries out the reaction Random endo-hydrolysis of N-acetyl-beta-D-glucosaminide (1-&gt;4)-beta-linkages in chitin and chitodextrins.. Functionally, defense against chitin-containing fungal pathogens. This chain is Acidic endochitinase Q, found in Nicotiana tabacum (Common tobacco).